The following is a 906-amino-acid chain: Aconitate hydratase A (906 aa).

A propeptide spanning residues 1–2 (MS) is cleaved from the precursor. Residues cysteine 441, cysteine 507, and cysteine 510 each contribute to the [4Fe-4S] cluster site.

This sequence belongs to the aconitase/IPM isomerase family. Monomer. [4Fe-4S] cluster serves as cofactor.

It carries out the reaction citrate = D-threo-isocitrate. The enzyme catalyses (2S,3R)-3-hydroxybutane-1,2,3-tricarboxylate = 2-methyl-cis-aconitate + H2O. The protein operates within carbohydrate metabolism; tricarboxylic acid cycle; isocitrate from oxaloacetate: step 2/2. It functions in the pathway organic acid metabolism; propanoate degradation. Involved in the catabolism of short chain fatty acids (SCFA) via the tricarboxylic acid (TCA)(acetyl degradation route) and probably the 2-methylcitrate cycle I (propionate degradation route). Catalyzes the reversible isomerization of citrate to isocitrate via cis-aconitate. Could catalyze the hydration of 2-methyl-cis-aconitate to yield (2R,3S)-2-methylisocitrate. The apo form of AcnA functions as a RNA-binding regulatory protein. This Deinococcus radiodurans (strain ATCC 13939 / DSM 20539 / JCM 16871 / CCUG 27074 / LMG 4051 / NBRC 15346 / NCIMB 9279 / VKM B-1422 / R1) protein is Aconitate hydratase A (acn).